The chain runs to 160 residues: MGVYTYENEFTSDIPAPKLFKAFVLDADNLIPKIAPQAVKCAEILEGDGGPGTIKKITFGEGSHYGYVKHKIHSIDKENHTYSYSLIEGDALSDNIEKIDYETKLVSAPHGGTVIKTTSKYHTKGDVEIKEEHVKAGKEKASHLFKLIEGYLKDHPSEYN.

Belongs to the BetVI family. Monomer.

In terms of biological role, may be involved in ripening of fruits. In Fragaria ananassa (Strawberry), this protein is Major strawberry allergen Fra a 1-A.